Here is an 84-residue protein sequence, read N- to C-terminus: Defensin-like protein 37 (84 aa).

The signal sequence occupies residues 1-24 (MAVKLIYLFLFLYIALLISGRTMS). 3 disulfides stabilise this stretch: C46–C67, C52–C79, and C56–C81.

It belongs to the DEFL family.

It is found in the secreted. The chain is Defensin-like protein 37 (EDA21) from Arabidopsis thaliana (Mouse-ear cress).